The primary structure comprises 284 residues: MKQKVVSIGDINVANDLPFVLFGGMNVLESRDLAMRICEHYVTVTQKLGIPYVFKASFDKANRSSIHSYRGPGLEEGMKIFEEIKKTFGVKTITDVHEASQAQPVSEVVDVIQLPAFLARQTDLVEAMAKTGAVINVKKPQFVSPGQMGNIVDKFKEGGNDQVILCDRGSNFGYDNLVVDMLGINVMKNATGGHPVIFDVTHALQTRDPFGAASGGRRAQVAELARAGMAVGLAGLFIEAHPEPNSAKCDGPSALPLDKLEPFLVQMKAIDDLVKSFPELDTSN.

It belongs to the KdsA family.

It is found in the cytoplasm. The catalysed reaction is D-arabinose 5-phosphate + phosphoenolpyruvate + H2O = 3-deoxy-alpha-D-manno-2-octulosonate-8-phosphate + phosphate. Its pathway is carbohydrate biosynthesis; 3-deoxy-D-manno-octulosonate biosynthesis; 3-deoxy-D-manno-octulosonate from D-ribulose 5-phosphate: step 2/3. It functions in the pathway bacterial outer membrane biogenesis; lipopolysaccharide biosynthesis. The chain is 2-dehydro-3-deoxyphosphooctonate aldolase from Serratia proteamaculans (strain 568).